A 268-amino-acid polypeptide reads, in one-letter code: Thiazole synthase (268 aa).

Residue K108 is the Schiff-base intermediate with DXP of the active site. Residues G169, 195 to 196 (AG), and 217 to 218 (NS) each bind 1-deoxy-D-xylulose 5-phosphate. The segment at 248-268 (RLKENPLASPSSPLDGVISNN) is disordered. Residues 255–268 (ASPSSPLDGVISNN) show a composition bias toward polar residues.

This sequence belongs to the ThiG family. In terms of assembly, homotetramer. Forms heterodimers with either ThiH or ThiS.

Its subcellular location is the cytoplasm. The catalysed reaction is [ThiS sulfur-carrier protein]-C-terminal-Gly-aminoethanethioate + 2-iminoacetate + 1-deoxy-D-xylulose 5-phosphate = [ThiS sulfur-carrier protein]-C-terminal Gly-Gly + 2-[(2R,5Z)-2-carboxy-4-methylthiazol-5(2H)-ylidene]ethyl phosphate + 2 H2O + H(+). Its pathway is cofactor biosynthesis; thiamine diphosphate biosynthesis. Functionally, catalyzes the rearrangement of 1-deoxy-D-xylulose 5-phosphate (DXP) to produce the thiazole phosphate moiety of thiamine. Sulfur is provided by the thiocarboxylate moiety of the carrier protein ThiS. In vitro, sulfur can be provided by H(2)S. This chain is Thiazole synthase, found in Prochlorococcus marinus (strain NATL2A).